The chain runs to 277 residues: Transcription factor WRKY19 (277 aa).

A DNA-binding region (WRKY) is located at residues Q100–A168.

Belongs to the WRKY group III family.

Its subcellular location is the nucleus. May play a role in defense responses. The polypeptide is Transcription factor WRKY19 (Oryza sativa subsp. japonica (Rice)).